The sequence spans 753 residues: Synaptotagmin-like protein 5 (753 aa).

The 117-residue stretch at 7–123 (FINLSFLLDH…IISGEWFLEE (117 aa)) folds into the RabBD domain. Residues 64-106 (CVHCQKSLGLIFDRGAPCQACSLRVCSECRVTGLDGSWKCTVC) form an FYVE-type zinc finger. 3 disordered regions span residues 145–188 (RRSP…GFLL), 221–283 (SFKS…GFEN), and 298–359 (TKSH…LNSL). A Phosphoserine modification is found at serine 147. Over residues 224 to 238 (SVSGSDRGSTTSSDL) the composition is skewed to low complexity. 2 stretches are compositionally biased toward polar residues: residues 260–275 (TQRSPAPSARSVTSIS) and 305–316 (TSGTPSIAVSGT). C2 domains follow at residues 429–550 (VTGE…DEWF) and 590–717 (PQGK…VDWM).

As to quaternary structure, binds RAB27A that has been activated by GTP-binding.

It localises to the membrane. Functionally, may act as Rab effector protein and play a role in vesicle trafficking. Binds phospholipids. This is Synaptotagmin-like protein 5 (Sytl5) from Rattus norvegicus (Rat).